The chain runs to 224 residues: Ribonuclease HII (224 aa).

The 203-residue stretch at 21 to 223 folds into the RNase H type-2 domain; that stretch reads RAIAGIDEAG…IRNAALEGEQ (203 aa). A divalent metal cation is bound by residues aspartate 27, glutamate 28, and aspartate 124.

Belongs to the RNase HII family. Mn(2+) is required as a cofactor. Requires Mg(2+) as cofactor.

The protein resides in the cytoplasm. The enzyme catalyses Endonucleolytic cleavage to 5'-phosphomonoester.. Functionally, endonuclease that specifically degrades the RNA of RNA-DNA hybrids. In Roseiflexus castenholzii (strain DSM 13941 / HLO8), this protein is Ribonuclease HII.